Consider the following 509-residue polypeptide: Maturase K (509 aa).

This sequence belongs to the intron maturase 2 family. MatK subfamily.

It localises to the plastid. The protein resides in the chloroplast. Usually encoded in the trnK tRNA gene intron. Probably assists in splicing its own and other chloroplast group II introns. The chain is Maturase K from Galbulimima belgraveana (Northern pigeonberry ash).